We begin with the raw amino-acid sequence, 179 residues long: UPF0316 protein BH0621 (179 aa).

The next 3 membrane-spanning stretches (helical) occupy residues 9–29 (ALTM…LFTV), 41–61 (LAAT…SLVL), and 67–87 (IENL…GMKV).

Belongs to the UPF0316 family.

It is found in the cell membrane. The sequence is that of UPF0316 protein BH0621 from Halalkalibacterium halodurans (strain ATCC BAA-125 / DSM 18197 / FERM 7344 / JCM 9153 / C-125) (Bacillus halodurans).